We begin with the raw amino-acid sequence, 915 residues long: DNA (cytosine-5)-methyltransferase 3 (915 aa).

Positions 1 to 14 are enriched in low complexity; sequence MAPSSPSSARPTRA. 2 disordered regions span residues 1 to 107 and 152 to 171; these read MAPS…AEEQ and HSNWPKRYERSTAANKPEED. Positions 21–30 are enriched in basic and acidic residues; that stretch reads AMAEEIHQNQ. Over residues 42 to 57 the composition is skewed to basic residues; that stretch reads AKRRRKAASSGKKPKP. Over residues 71–80 the composition is skewed to basic and acidic residues; the sequence is KKGETEKTEP. A compositionally biased stretch (acidic residues) spans 81–107; sequence VVDDVCAEEPDEEELAMGEEEAEAEEQ. Residues 188 to 313 form the BAH domain; sequence IVYCLGDDVY…VAYSTFANIS (126 aa). Residues 315–328 show a composition bias toward polar residues; the sequence is ENGQSGSETASGIS. The disordered stretch occupies residues 315–338; the sequence is ENGQSGSETASGISSDDAGLETSS. The 532-residue stretch at 345–876 folds into the SAM-dependent MTase C5-type domain; sequence ATLLDLYSGC…YCLGQAYLGE (532 aa). The 64-residue stretch at 445–508 folds into the Chromo domain; sequence FVVQKLIGIR…EGRKRKILPL (64 aa). C521 is an active-site residue.

Belongs to the class I-like SAM-binding methyltransferase superfamily. C5-methyltransferase family.

It localises to the nucleus. It catalyses the reaction a 2'-deoxycytidine in DNA + S-adenosyl-L-methionine = a 5-methyl-2'-deoxycytidine in DNA + S-adenosyl-L-homocysteine + H(+). Its function is as follows. May be involved in the CpXpG methylation and in gene silencing. The chain is DNA (cytosine-5)-methyltransferase 3 (DMT105) from Zea mays (Maize).